Here is a 337-residue protein sequence, read N- to C-terminus: Probable tyrosine--tRNA ligase, cytoplasmic (337 aa).

Residue Tyr35 participates in L-tyrosine binding. Positions 40–48 match the 'HIGH' region motif; that stretch reads ITGKPHIAY. The L-tyrosine site is built by Tyr162, Gln166, Asp169, and Gln184. Positions 218 to 222 match the 'KMSKS' region motif; sequence KMSSS.

Belongs to the class-I aminoacyl-tRNA synthetase family. As to quaternary structure, homodimer.

Its subcellular location is the cytoplasm. The catalysed reaction is tRNA(Tyr) + L-tyrosine + ATP = L-tyrosyl-tRNA(Tyr) + AMP + diphosphate + H(+). This is Probable tyrosine--tRNA ligase, cytoplasmic from Encephalitozoon cuniculi (strain GB-M1) (Microsporidian parasite).